The chain runs to 505 residues: Maturase K (505 aa).

Belongs to the intron maturase 2 family. MatK subfamily.

The protein resides in the plastid. It is found in the chloroplast. In terms of biological role, usually encoded in the trnK tRNA gene intron. Probably assists in splicing its own and other chloroplast group II introns. The polypeptide is Maturase K (Nuphar advena (Common spatterdock)).